A 183-amino-acid polypeptide reads, in one-letter code: ATP synthase subunit b, chloroplastic (183 aa).

The helical transmembrane segment at 28–48 (DIFEANVINILLLLFGLIYVL) threads the bilayer.

This sequence belongs to the ATPase B chain family. F-type ATPases have 2 components, F(1) - the catalytic core - and F(0) - the membrane proton channel. F(1) has five subunits: alpha(3), beta(3), gamma(1), delta(1), epsilon(1). F(0) has four main subunits: a(1), b(1), b'(1) and c(10-14). The alpha and beta chains form an alternating ring which encloses part of the gamma chain. F(1) is attached to F(0) by a central stalk formed by the gamma and epsilon chains, while a peripheral stalk is formed by the delta, b and b' chains.

The protein resides in the plastid. It is found in the chloroplast thylakoid membrane. Functionally, f(1)F(0) ATP synthase produces ATP from ADP in the presence of a proton or sodium gradient. F-type ATPases consist of two structural domains, F(1) containing the extramembraneous catalytic core and F(0) containing the membrane proton channel, linked together by a central stalk and a peripheral stalk. During catalysis, ATP synthesis in the catalytic domain of F(1) is coupled via a rotary mechanism of the central stalk subunits to proton translocation. Component of the F(0) channel, it forms part of the peripheral stalk, linking F(1) to F(0). This Porphyra purpurea (Red seaweed) protein is ATP synthase subunit b, chloroplastic.